The following is a 434-amino-acid chain: Putative B3 domain-containing protein Os04g0347400 (434 aa).

3 DNA-binding regions (TF-B3) span residues 27-124 (SFHK…FDTT), 150-246 (KPQF…FGIN), and 326-432 (WIKK…DRVE).

It is found in the nucleus. The sequence is that of Putative B3 domain-containing protein Os04g0347400 from Oryza sativa subsp. japonica (Rice).